A 206-amino-acid chain; its full sequence is Interleukin-24 (206 aa).

Residues 1–51 (MNFQQRLQSLWTLARPFCPPLLATASQMQMVVLPCLGFTLLLWSQVSGAQG) form the signal peptide. Cys-59 and Cys-106 are joined by a disulfide. Residues Asn-85 and Asn-99 are each glycosylated (N-linked (GlcNAc...) asparagine). Lys-122 is covalently cross-linked (Glycyl lysine isopeptide (Lys-Gly) (interchain with G-Cter in ubiquitin)). Asn-126 carries an N-linked (GlcNAc...) asparagine glycan.

This sequence belongs to the IL-10 family. Post-translationally, glycosylated. In terms of processing, ubiquitination at Lys-122 promotes proteasomal degradation. In terms of tissue distribution, up-regulated in melanoma cells induced to terminally differentiate.

The protein localises to the secreted. Functionally, multifunctional cytokine mainly produced by T-cells that plays a regulatory role in immune response, tissue homeostasis, host defense, and oncogenesis. Possesses antiviral functions and induces the type I interferon response during influenza infection. Signals through two receptor complexes IL20RA/IL20RB or IL20RB/IL22RA1. In turn, stimulates the JAK1-STAT3 and MAPK pathways and promotes the secretion of pro-inflammatory mediators including IL8 and MMP1. Intracellularly, maintains endoplasmic reticulum homeostasis by restricting the eIF2alpha-CHOP pathway-mediated stress signal. In addition, acts as a quality control mechanism for the ubiquitin proteasome system by alerting the cell to proteasome dysfunction through activation of PKR/EIF2AK2. This is Interleukin-24 (IL24) from Homo sapiens (Human).